A 763-amino-acid chain; its full sequence is Phosphoglycerol transferase I (763 aa).

4 helical membrane passes run 4–19, 26–48, 76–98, and 105–127; these read LLSF…IYAW, WWFA…LFAS, YILP…GWIL, and PHHF…ASPA.

It belongs to the OpgB family.

Its subcellular location is the cell inner membrane. It carries out the reaction a phosphatidylglycerol + a membrane-derived-oligosaccharide D-glucose = a 1,2-diacyl-sn-glycerol + a membrane-derived-oligosaccharide 6-(glycerophospho)-D-glucose.. It participates in glycan metabolism; osmoregulated periplasmic glucan (OPG) biosynthesis. Its function is as follows. Transfers a phosphoglycerol residue from phosphatidylglycerol to the membrane-bound nascent glucan backbones. The polypeptide is Phosphoglycerol transferase I (Escherichia coli O157:H7).